Reading from the N-terminus, the 147-residue chain is UPF0306 protein YhbP (147 aa).

It belongs to the UPF0306 family.

This chain is UPF0306 protein YhbP, found in Salmonella choleraesuis (strain SC-B67).